A 556-amino-acid chain; its full sequence is Polypyrimidine tract-binding protein 1 (556 aa).

Met1 is subject to N-acetylmethionine. The residue at position 16 (Ser16) is a Phosphoserine. The tract at residues 35–54 (ASAANGNDSKKFKGDNRSTG) is disordered. RRM domains are found at residues 58–142 (RVIH…SSPN), 183–259 (LRII…FSKL), and 362–436 (SVLL…LSKH). Lys64 participates in a covalent cross-link: Glycyl lysine isopeptide (Lys-Gly) (interchain with G-Cter in SUMO2). Residue Tyr126 is modified to Phosphotyrosine. Residue Thr137 is modified to Phosphothreonine. Ser140 carries the phosphoserine modification. Lys217 is covalently cross-linked (Glycyl lysine isopeptide (Lys-Gly) (interchain with G-Cter in SUMO2)). Residues 436–458 (HQSVQLPREGQEDQGLTKDYGSS) form a disordered region. Ser458 carries the phosphoserine modification. In terms of domain architecture, RRM 4 spans 479–554 (ATLHLSNIPP…HHLRVSFSKS (76 aa)).

In terms of assembly, monomer. Part of a ternary complex containing KHSRP, PTBP1, PTBP2 and HNRPH1. Interacts with RAVER1 and SFPQ.

It localises to the nucleus. Its function is as follows. Plays a role in pre-mRNA splicing and in the regulation of alternative splicing events. Activates exon skipping of its own pre-mRNA during muscle cell differentiation. Binds to the polypyrimidine tract of introns. May promote RNA looping when bound to two separate polypyrimidine tracts in the same pre-mRNA. May promote the binding of U2 snRNP to pre-mRNA. Cooperates with RAVER1 to modulate switching between mutually exclusive exons during maturation of the TPM1 pre-mRNA. Represses the splicing of MAPT/Tau exon 10. Binds to polypyrimidine-rich controlling element (PCE) of CFTR and promotes exon skipping of CFTR exon 9, thereby antagonizing TIA1 and its role in exon inclusion of CFTR exon 9. Plays a role in the splicing of pyruvate kinase PKM by binding repressively to a polypyrimidine tract flanking PKM exon 9, inhibiting exon 9 inclusion and resulting in exon 10 inclusion and production of the PKM M2 isoform. The chain is Polypyrimidine tract-binding protein 1 (Ptbp1) from Rattus norvegicus (Rat).